The following is a 276-amino-acid chain: Nickel import system permease protein NikC (276 aa).

5 helical membrane-spanning segments follow: residues 10–30, 73–93, 108–128, 186–206, and 238–258; these read LIFFVFVAFIFVVIVLQFFVS, LFVTVLTLIAIVVIGVTLGLF, FIDVGLSIPEFIIMIALASFF, IIPAIIVLMVVDFGKIILYIS, and IMLIAPASVIAITILIFNLTG. The region spanning 69–258 is the ABC transmembrane type-1 domain; that stretch reads ARSTLFVTVL…ITILIFNLTG (190 aa).

It belongs to the binding-protein-dependent transport system permease family. OppBC subfamily. As to quaternary structure, the complex is composed of two ATP-binding proteins (NikD and NikE), two transmembrane proteins (NikB and NikC) and a solute-binding protein (NikA).

Its subcellular location is the cell membrane. In terms of biological role, part of the ABC transporter complex NikABCDE (Opp2) involved in nickel import. Probably responsible for the translocation of the substrate across the membrane. This Staphylococcus aureus (strain USA300) protein is Nickel import system permease protein NikC.